Reading from the N-terminus, the 158-residue chain is NAD(P)H-quinone oxidoreductase subunit N (158 aa).

Belongs to the complex I NdhN subunit family. NDH-1 can be composed of about 15 different subunits; different subcomplexes with different compositions have been identified which probably have different functions.

The protein localises to the cellular thylakoid membrane. The catalysed reaction is a plastoquinone + NADH + (n+1) H(+)(in) = a plastoquinol + NAD(+) + n H(+)(out). The enzyme catalyses a plastoquinone + NADPH + (n+1) H(+)(in) = a plastoquinol + NADP(+) + n H(+)(out). NDH-1 shuttles electrons from an unknown electron donor, via FMN and iron-sulfur (Fe-S) centers, to quinones in the respiratory and/or the photosynthetic chain. The immediate electron acceptor for the enzyme in this species is believed to be plastoquinone. Couples the redox reaction to proton translocation, and thus conserves the redox energy in a proton gradient. Cyanobacterial NDH-1 also plays a role in inorganic carbon-concentration. The chain is NAD(P)H-quinone oxidoreductase subunit N from Prochlorococcus marinus (strain AS9601).